Reading from the N-terminus, the 183-residue chain is Dual-action ribosomal maturation protein DarP (183 aa).

Residues 1-21 (MKQKPEDWLNDVPDNQEDDED) form a disordered region.

The protein belongs to the DarP family.

It is found in the cytoplasm. In terms of biological role, member of a network of 50S ribosomal subunit biogenesis factors which assembles along the 30S-50S interface, preventing incorrect 23S rRNA structures from forming. Promotes peptidyl transferase center (PTC) maturation. In Pectobacterium atrosepticum (strain SCRI 1043 / ATCC BAA-672) (Erwinia carotovora subsp. atroseptica), this protein is Dual-action ribosomal maturation protein DarP.